The following is a 461-amino-acid chain: V-type ATP synthase beta chain (461 aa).

The protein belongs to the ATPase alpha/beta chains family.

Functionally, produces ATP from ADP in the presence of a proton gradient across the membrane. The V-type beta chain is a regulatory subunit. This Streptococcus pneumoniae serotype 19F (strain G54) protein is V-type ATP synthase beta chain.